The sequence spans 149 residues: Large ribosomal subunit protein uL15 (149 aa).

Positions 1-57 (MRLNDPKPKTGSQHRRRRVGRGIAAGQGASCGFGMRGQKSRSGRPTRPGFEGGQNPL) are disordered. A compositionally biased stretch (gly residues) spans 23 to 35 (IAAGQGASCGFGM).

Belongs to the universal ribosomal protein uL15 family. In terms of assembly, part of the 50S ribosomal subunit.

Its function is as follows. Binds to the 23S rRNA. This chain is Large ribosomal subunit protein uL15, found in Acaryochloris marina (strain MBIC 11017).